The following is a 447-amino-acid chain: Argininosuccinate synthase (447 aa).

Residues 20–28 (AFSGGLDTS) and Ala46 each bind ATP. Residue Tyr102 participates in L-citrulline binding. ATP-binding residues include Gly132 and Thr134. Thr134, Asn138, and Asp139 together coordinate L-aspartate. Position 138 (Asn138) interacts with L-citrulline. Asp139 is an ATP binding site. Residues Arg142 and Ser195 each coordinate L-citrulline. ATP is bound at residue Asp197. Residues Thr204, Glu206, and Glu283 each contribute to the L-citrulline site.

Belongs to the argininosuccinate synthase family. Type 2 subfamily. In terms of assembly, homotetramer.

The protein resides in the cytoplasm. It carries out the reaction L-citrulline + L-aspartate + ATP = 2-(N(omega)-L-arginino)succinate + AMP + diphosphate + H(+). Its pathway is amino-acid biosynthesis; L-arginine biosynthesis; L-arginine from L-ornithine and carbamoyl phosphate: step 2/3. The chain is Argininosuccinate synthase (argG) from Neisseria meningitidis serogroup A / serotype 4A (strain DSM 15465 / Z2491).